The chain runs to 579 residues: Golvesin (579 aa).

Residues 1–75 are required for targeting to the plasma membrane; the sequence is MTSVNEHSLL…NNNNNNNNNN (75 aa). The tract at residues 1–79 is disordered; that stretch reads MTSVNEHSLL…NNNNNNSNTG (79 aa). Topologically, residues 1-94 are lumenal; the sequence is MTSVNEHSLL…KKKKWNFRKK (94 aa). The span at 11–77 shows a compositional bias: low complexity; it reads INNNENNDNN…NNNNNNNNSN (67 aa). A helical; Signal-anchor for type III membrane protein membrane pass occupies residues 95–115; that stretch reads ILPMIVILIITAIVVCLVVFS. Residues 95-118 form a required for membrane targeting region; sequence ILPMIVILIITAIVVCLVVFSLPF. Over 116–578 the chain is Cytoplasmic; it reads LPFDSSNTIY…SNDFVIAESP (463 aa). The segment at 559–579 is required for transfer to endosomes and contractile vacuoles; the protein is trapped in the Golgi; sequence WPSSKGIPGFSNDFVIAESPE.

It localises to the contractile vacuole membrane. It is found in the endosome membrane. Its subcellular location is the golgi apparatus membrane. The polypeptide is Golvesin (gol) (Dictyostelium discoideum (Social amoeba)).